The sequence spans 544 residues: Shootin-1 (544 aa).

Coiled-coil stretches lie at residues 17 to 100 (SNQV…LKRK), 141 to 184 (IVIT…EKHD), and 259 to 349 (EALQ…QVSN). The tract at residues 343-544 (KLQQVSNPPT…TTTICTEQLS (202 aa)) is disordered. The span at 352 to 371 (TAAPAPPPPPPPPPPPPPPS) shows a compositional bias: pro residues. Residues 372-383 (SSSSNPLSSLLS) show a composition bias toward low complexity. The span at 397-412 (LVEKDSSEKSPEKDVR) shows a compositional bias: basic and acidic residues. Pro residues predominate over residues 469-479 (SSSPGPRPPSP). The stretch at 480–504 (SEKSELEKALQRRREAVKSAKNNTN) forms a coiled coil. Residues 481 to 497 (EKSELEKALQRRREAVK) are compositionally biased toward basic and acidic residues. Residues 499–544 (AKNNTNPSSVVDLTQIKQTRSEPGQNTGDQETLRHTTTTICTEQLS) are compositionally biased toward polar residues.

The protein belongs to the shootin family.

Its subcellular location is the perikaryon. It is found in the cell projection. It localises to the axon. The protein resides in the growth cone. The protein localises to the cytoplasm. Its subcellular location is the cytoskeleton. It is found in the filopodium. It localises to the lamellipodium. In terms of biological role, involved in the generation of internal asymmetric signals required for neuronal polarization and neurite outgrowth. The polypeptide is Shootin-1 (Danio rerio (Zebrafish)).